The following is a 673-amino-acid chain: NADH-quinone oxidoreductase chain 3 (673 aa).

One can recognise a 2Fe-2S ferredoxin-type domain in the interval 5-90; sequence RKIKIDDTII…PSEIRTNSPM (86 aa). [2Fe-2S] cluster is bound by residues Cys-37, Cys-48, Cys-51, and Cys-66. The 4Fe-4S His(Cys)3-ligated-type domain maps to 90-129; it reads MVKKAREGVMEFLLINHPLDCPICDQGGECDLQDQAMAYG. The [4Fe-4S] cluster site is built by His-106, Cys-110, Cys-113, Cys-119, Cys-158, Cys-161, Cys-164, and Cys-208. The 57-residue stretch at 227–283 folds into the 4Fe-4S Mo/W bis-MGD-type domain; it reads LTKTESIDVMDALGSSIRIDTKGREVMRILPRNHDGVNEEWISDKTRFVWDGLRRQR.

This sequence belongs to the complex I 75 kDa subunit family. As to quaternary structure, NDH-1 is composed of at least 14 different subunits, Nqo1 to Nqo14. The complex has a L-shaped structure, with the hydrophobic arm (subunits Nqo7, Nqo8, Nqo10 to Nqo14) embedded in the inner membrane and the hydrophilic peripheral arm (subunits Nqo1 to Nqo6, Nqo9) protruding into the bacterial cytoplasm. The hydrophilic domain contains all the redox centers. [2Fe-2S] cluster is required as a cofactor. [4Fe-4S] cluster serves as cofactor.

The protein resides in the cell inner membrane. The catalysed reaction is a quinone + NADH + 5 H(+)(in) = a quinol + NAD(+) + 4 H(+)(out). NDH-1 shuttles electrons from NADH, via FMN and iron-sulfur (Fe-S) centers, to quinones in the respiratory chain. The immediate electron acceptor for the enzyme in this species is believed to be ubiquinone. Couples the redox reaction to proton translocation (for every two electrons transferred, four hydrogen ions are translocated across the cytoplasmic membrane), and thus conserves the redox energy in a proton gradient. This Paracoccus denitrificans protein is NADH-quinone oxidoreductase chain 3.